The sequence spans 268 residues: DNA ligase (268 aa).

The N6-AMP-lysine intermediate role is filled by Lys41. Positions 111, 181, and 187 each coordinate ATP.

This sequence belongs to the ATP-dependent DNA ligase family. A divalent metal cation is required as a cofactor.

The catalysed reaction is ATP + (deoxyribonucleotide)n-3'-hydroxyl + 5'-phospho-(deoxyribonucleotide)m = (deoxyribonucleotide)n+m + AMP + diphosphate.. Its function is as follows. Catalyzes efficient strand joining on a single nicked DNA. This chain is DNA ligase (ligA), found in Haemophilus influenzae (strain ATCC 51907 / DSM 11121 / KW20 / Rd).